A 2223-amino-acid chain; its full sequence is Sperm-associated antigen 17 (2223 aa).

Basic and acidic residues-rich tracts occupy residues 144-172 (RENEKKVIEDKPKLEKDKGKAKSPKEKKA) and 200-212 (RRGEDDHTNRYID). Residues 144–214 (RENEKKVIED…DHTNRYIDDE (71 aa)) form a disordered region. Positions 266 to 295 (NQQQEVLLQSEDLEAEKLKKENAIKELKTF) form a coiled coil. 6 disordered regions span residues 387–416 (MPTSEAPQPAVPAPGKKKAQYEEPQAPPPV), 680–710 (MSVQDNESNREPSDPSQCDANNMKHSDLNNL), 731–762 (PQHESLEQTTNNEIKDDAVTKADSHEKKPKKM), 950–1015 (EERL…EPKI), 1179–1212 (GKIKGKEKPKESLKEEEHPKEEEKKEEEVEPEPV), and 1345–1378 (ETIPSEITNTKKGKSHKSQSSMAHKGEIHDPPPE). 3 stretches are compositionally biased toward basic and acidic residues: residues 743-756 (EIKDDAVTKADSHE), 950-999 (EERL…EQVK), and 1182-1205 (KGKEKPKESLKEEEHPKEEEKKEE). A coiled-coil region spans residues 940–966 (WKEEQHRLAEEERLREEKKAEKKGKEA). The span at 1345 to 1354 (ETIPSEITNT) shows a compositional bias: polar residues. Residues 1874 to 1907 (RHTASSKRWKEKIDKTRKEIETTQNYLMDIKNRI) are a coiled coil. Disordered stretches follow at residues 1938-1957 (TKKNEDANETAVQDTSDLNL) and 1962-2008 (HKVS…SYEP). Residues 1988–1998 (TAQNQTENLTK) are compositionally biased toward polar residues.

Interacts (via the C-terminus) with SPAG6; the interaction probably occurs on polymerized microtubules. In terms of tissue distribution, highly expressed in testis. Expressed in organs that contain cilia-bearing cells including brain, oviduct, lung, and uterus.

It is found in the cytoplasm. Its subcellular location is the cytoskeleton. The protein resides in the flagellum axoneme. The protein localises to the cytoplasmic vesicle. It localises to the secretory vesicle. It is found in the acrosome. Its subcellular location is the golgi apparatus. Component of the central pair apparatus of ciliary axonemes. Plays a critical role in the function and structure of motile cilia. May play a role in endochondral bone formation, most likely because of a function in primary cilia of chondrocytes and osteoblasts. Essential for normal spermatogenesis and male fertility. Required for normal manchette structure, transport of proteins along the manchette microtubules and formation of the sperm head and flagellum. Essential for sperm flagellum development and proper assembly of the respiratory motile cilia central pair apparatus, but not the brain ependymal cilia. This is Sperm-associated antigen 17 (SPAG17) from Homo sapiens (Human).